Here is a 274-residue protein sequence, read N- to C-terminus: 2-amino-4,5-dihydroxy-6-oxo-7-(phosphonooxy)heptanoate synthase (274 aa).

This sequence belongs to the DeoC/FbaB aldolase family. GriI subfamily. In terms of assembly, homodecamer.

It catalyses the reaction 2-amino-4,5-dihydroxy-6-oxo-7-(phosphooxy)heptanoate = L-aspartate 4-semialdehyde + dihydroxyacetone phosphate. Functionally, catalyzes aldol condensation between L-aspartate-4-semialdehyde (ASA) and dihydroxyacetone phosphate (DHAP), to form 2-amino-4,5-dihydroxy-6-oxo-7-(phosphonooxy)heptanoate. This is 2-amino-4,5-dihydroxy-6-oxo-7-(phosphonooxy)heptanoate synthase (griI) from Streptomyces griseus subsp. griseus (strain JCM 4626 / CBS 651.72 / NBRC 13350 / KCC S-0626 / ISP 5235).